A 287-amino-acid polypeptide reads, in one-letter code: Flagellin (287 aa).

The protein belongs to the bacterial flagellin family.

Its subcellular location is the secreted. The protein localises to the bacterial flagellum. In terms of biological role, flagellin is the subunit protein which polymerizes to form the filaments of bacterial flagella. This Listeria monocytogenes serovar 1/2a (strain ATCC BAA-679 / EGD-e) protein is Flagellin (flaA).